Consider the following 292-residue polypeptide: MTFADRLSAYTRLIRLDKPIGILLLLWPTLWGLWLAADGMPDPMILVIFILGTILMRSAGCAINDFADRRIDPHVSRTRNRPLAAGLITAREALLIAAGLSLCAFLLILPLNLLTIQLSVPALFLAASYPFTKRFFAMPQAYLGIAFSFGIPMAFAAQTGTVPPLAWLLVLANLFWVIAYDTEYALVDRADDLKIGIRTSAITLGRFDVAGILLCHIIFLSTLTYAGILLQRGIWFYGALLVALGLVIVQYGMIRKREPSRCFQAFLHNNWIGAVIFAGILLDTLFRTDQSF.

Transmembrane regions (helical) follow at residues 20 to 40 (IGIL…ADGM), 43 to 63 (PMIL…GCAI), 94 to 114 (LLIA…LNLL), 135 to 155 (FFAM…PMAF), 160 to 180 (GTVP…VIAY), 209 to 229 (VAGI…AGIL), 234 to 254 (IWFY…YGMI), and 266 to 286 (FLHN…DTLF).

It belongs to the UbiA prenyltransferase family. It depends on Mg(2+) as a cofactor.

It is found in the cell inner membrane. The catalysed reaction is all-trans-octaprenyl diphosphate + 4-hydroxybenzoate = 4-hydroxy-3-(all-trans-octaprenyl)benzoate + diphosphate. It functions in the pathway cofactor biosynthesis; ubiquinone biosynthesis. Catalyzes the prenylation of para-hydroxybenzoate (PHB) with an all-trans polyprenyl group. Mediates the second step in the final reaction sequence of ubiquinone-8 (UQ-8) biosynthesis, which is the condensation of the polyisoprenoid side chain with PHB, generating the first membrane-bound Q intermediate 3-octaprenyl-4-hydroxybenzoate. This chain is 4-hydroxybenzoate octaprenyltransferase, found in Nitrosomonas europaea (strain ATCC 19718 / CIP 103999 / KCTC 2705 / NBRC 14298).